A 1397-amino-acid chain; its full sequence is ABC transporter G family member 41 (1397 aa).

In terms of domain architecture, ABC transporter 1 spans 138–411 (SLSKFVCSKK…FEGCGFKCPE (274 aa)). Residue 171 to 178 (GPPGCGKT) participates in ATP binding. The ABC transmembrane type-2 1 domain maps to 489-701 (EMLKACSRRE…AEIGLTANEF (213 aa)). A run of 6 helical transmembrane segments spans residues 507–527 (FIYL…MTVF), 549–570 (ALFR…RLGV), 594–614 (IPLS…VIGY), 625–645 (FIIL…IASI), 651–671 (ACSI…GFVI), and 735–755 (TAFG…TLAL). The ABC transporter 2 domain maps to 805-1050 (VTFQNVQYYI…VIKYFESIPG (246 aa)). Residue 842–849 (GVSGAGKT) coordinates ATP. The region spanning 1122–1336 (GQLKACLWKQ…VLEGLLSSQY (215 aa)) is the ABC transmembrane type-2 2 domain. The next 7 membrane-spanning stretches (helical) occupy residues 1141-1161 (HNLT…LLFW), 1173-1193 (LFSI…NNCA), 1229-1249 (VPYS…MIGY), 1260-1280 (LYSI…MVAL), 1286-1306 (MALT…GFVM), 1314-1334 (WWIW…LLSS), and 1369-1389 (VVAF…AFFM).

This sequence belongs to the ABC transporter superfamily. ABCG family. PDR (TC 3.A.1.205) subfamily. In terms of tissue distribution, confined to roots.

It is found in the membrane. May be a general defense protein. This chain is ABC transporter G family member 41 (ABCG41), found in Arabidopsis thaliana (Mouse-ear cress).